A 200-amino-acid chain; its full sequence is FMN-dependent NADH:quinone oxidoreductase (200 aa).

FMN-binding positions include serine 10, 96 to 99 (MYNF), and 140 to 143 (SRGG).

It belongs to the azoreductase type 1 family. Homodimer. FMN is required as a cofactor.

It carries out the reaction 2 a quinone + NADH + H(+) = 2 a 1,4-benzosemiquinone + NAD(+). The catalysed reaction is N,N-dimethyl-1,4-phenylenediamine + anthranilate + 2 NAD(+) = 2-(4-dimethylaminophenyl)diazenylbenzoate + 2 NADH + 2 H(+). Quinone reductase that provides resistance to thiol-specific stress caused by electrophilic quinones. Its function is as follows. Also exhibits azoreductase activity. Catalyzes the reductive cleavage of the azo bond in aromatic azo compounds to the corresponding amines. The protein is FMN-dependent NADH:quinone oxidoreductase of Photorhabdus laumondii subsp. laumondii (strain DSM 15139 / CIP 105565 / TT01) (Photorhabdus luminescens subsp. laumondii).